The sequence spans 94 residues: Large ribosomal subunit protein bL27 (94 aa).

Positions 1–9 (MLELNLQLF) are excised as a propeptide. The interval 12-33 (KKGGGSTSNGRDSQAKRLGAKA) is disordered.

It belongs to the bacterial ribosomal protein bL27 family. In terms of processing, the N-terminus is cleaved by ribosomal processing cysteine protease Prp.

The polypeptide is Large ribosomal subunit protein bL27 (Lactococcus lactis subsp. lactis (strain IL1403) (Streptococcus lactis)).